A 627-amino-acid polypeptide reads, in one-letter code: DNA mismatch repair protein MutL (627 aa).

Residues 363–397 are disordered; it reads FAEPAAREPVAPRYSPAPASGSRPAAPWPNAQPGY. The segment covering 364–387 has biased composition (low complexity); sequence AEPAAREPVAPRYSPAPASGSRPA.

It belongs to the DNA mismatch repair MutL/HexB family.

This protein is involved in the repair of mismatches in DNA. It is required for dam-dependent methyl-directed DNA mismatch repair. May act as a 'molecular matchmaker', a protein that promotes the formation of a stable complex between two or more DNA-binding proteins in an ATP-dependent manner without itself being part of a final effector complex. This is DNA mismatch repair protein MutL from Shigella flexneri serotype 5b (strain 8401).